Here is a 210-residue protein sequence, read N- to C-terminus: Thymidylate kinase (210 aa).

10–17 contacts ATP; sequence GLEGAGKT.

The protein belongs to the thymidylate kinase family.

It carries out the reaction dTMP + ATP = dTDP + ADP. Functionally, phosphorylation of dTMP to form dTDP in both de novo and salvage pathways of dTTP synthesis. The chain is Thymidylate kinase from Actinobacillus succinogenes (strain ATCC 55618 / DSM 22257 / CCUG 43843 / 130Z).